The chain runs to 512 residues: Na(+)/H(+) antiporter NhaB (512 aa).

The next 11 helical transmembrane spans lie at 28-48 (FLII…WLLV), 52-72 (IFTL…LLAI), 97-117 (LLLM…LFIF), 144-164 (FLDA…FYGI), 201-221 (LMMH…VGEP), 237-257 (FFLR…LTCF), 296-330 (LALI…IILA), 347-367 (TEAL…AVII), 390-410 (LFYL…VGSV), 446-466 (ATPN…APLI), and 474-494 (VWMA…CVKF).

This sequence belongs to the NhaB Na(+)/H(+) (TC 2.A.34) antiporter family.

It is found in the cell inner membrane. It catalyses the reaction 2 Na(+)(in) + 3 H(+)(out) = 2 Na(+)(out) + 3 H(+)(in). Na(+)/H(+) antiporter that extrudes sodium in exchange for external protons. The chain is Na(+)/H(+) antiporter NhaB from Enterobacter sp. (strain 638).